Consider the following 176-residue polypeptide: MKSLYFVAGLLVMLAQGSWQHSLQNTEEKSSSFPAPQTDPLGDPDQISEDKRHSQGTFTSDYSKYLDSRRAQDFVQWLMNTKRNKNNIAKRHDEFERHAEGTFTSDVSSYLEGQAAKEFIAWLVKGRGRRDFPEEVNIVEELRRRHADGSFSDEMNTVLDSLATRDFINWLLQTKI.

Residues Met-1–Gln-20 form the signal peptide. The span at Asn-25–Ala-35 shows a compositional bias: polar residues. The disordered stretch occupies residues Asn-25 to Thr-59. A Phosphoserine modification is found at Ser-54. Residues Asn-84–Ala-89 constitute a propeptide that is removed on maturation. Phosphoserine is present on residues Ser-105 and Ser-108. The residue at position 127 (Arg-127) is an Arginine amide. A propeptide spanning residues Asp-131–Arg-145 is cleaved from the precursor. Phosphoserine is present on residues Ser-150 and Ser-152.

It belongs to the glucagon family. Post-translationally, proglucagon is post-translationally processed in a tissue-specific manner in pancreatic A cells and intestinal L cells. In pancreatic A cells, the major bioactive hormone is glucagon cleaved by PCSK2/PC2. In the intestinal L cells PCSK1/PC1 liberates GLP-1, GLP-2, glicentin and oxyntomodulin. GLP-1 is further N-terminally truncated by post-translational processing in the intestinal L cells resulting in GLP-1(7-37) GLP-1-(7-36)amide. The C-terminal amidation is neither important for the metabolism of GLP-1 nor for its effects on the endocrine pancreas. As to expression, glucagon is secreted in the A cells of the islets of Langerhans. GLP-1, GLP-2, oxyntomodulin and glicentin are secreted from enteroendocrine cells throughout the gastrointestinal tract. GLP-1 and GLP-2 are also secreted in selected neurons in the brain.

The protein resides in the secreted. Plays a key role in glucose metabolism and homeostasis. Regulates blood glucose by increasing gluconeogenesis and decreasing glycolysis. A counterregulatory hormone of insulin, raises plasma glucose levels in response to insulin-induced hypoglycemia. Plays an important role in initiating and maintaining hyperglycemic conditions in diabetes. In terms of biological role, potent stimulator of glucose-dependent insulin release. Also stimulates insulin release in response to IL6. Plays important roles on gastric motility and the suppression of plasma glucagon levels. May be involved in the suppression of satiety and stimulation of glucose disposal in peripheral tissues, independent of the actions of insulin. Has growth-promoting activities on intestinal epithelium. May also regulate the hypothalamic pituitary axis (HPA) via effects on LH, TSH, CRH, oxytocin, and vasopressin secretion. Increases islet mass through stimulation of islet neogenesis and pancreatic beta cell proliferation. Inhibits beta cell apoptosis. Its function is as follows. Stimulates intestinal growth and up-regulates villus height in the small intestine, concomitant with increased crypt cell proliferation and decreased enterocyte apoptosis. The gastrointestinal tract, from the stomach to the colon is the principal target for GLP-2 action. Plays a key role in nutrient homeostasis, enhancing nutrient assimilation through enhanced gastrointestinal function, as well as increasing nutrient disposal. Stimulates intestinal glucose transport and decreases mucosal permeability. Functionally, significantly reduces food intake. Inhibits gastric emptying in humans. Suppression of gastric emptying may lead to increased gastric distension, which may contribute to satiety by causing a sensation of fullness. May modulate gastric acid secretion and the gastro-pyloro-duodenal activity. May play an important role in intestinal mucosal growth in the early period of life. This Ovis aries (Sheep) protein is Pro-glucagon (GCG).